The following is a 249-amino-acid chain: Proteasome activator complex subunit 1 (249 aa).

Positions 60–102 are disordered; the sequence is PLDIPVPDPVKEKEKEERKKQQEKEDKDEKKKGEDEDKGPPCG. Positions 68 to 98 are enriched in basic and acidic residues; sequence PVKEKEKEERKKQQEKEDKDEKKKGEDEDKG.

This sequence belongs to the PA28 family. In terms of assembly, heterodimer of PSME1 and PSME2, which forms a hexameric ring. PSME1 can form homoheptamers.

Implicated in immunoproteasome assembly and required for efficient antigen processing. The PA28 activator complex enhances the generation of class I binding peptides by altering the cleavage pattern of the proteasome. This is Proteasome activator complex subunit 1 (PSME1) from Homo sapiens (Human).